Here is a 441-residue protein sequence, read N- to C-terminus: MNETDTLFAPASGFGRAAVAVIRISGPAAGGVLATLGGRLPTPRRLSLRSLRDPRDGTELDRALVAWFPGPDTYSGEDMAELHLHGGAAVRMRVLATLARLPGCRAAEPGAFTRRAVLNGRMDLAEAEAVADLIDAETEGQRRQALRQLDGALSRQVAAWRAEAIDCLAAAEAALDFADEGDVDDAGLDAALFDRAARLRDAVAATLRDGHRGERLREGFTVVLAGAPNSGKSTLLNALSRRDVAIVSDSPGTTRDAIEVRLDLGGLPVLLVDTAGLRETAEPIEAQGIVRTRARIDTADLVVALVPPGGAVPDLGPGCRPILIVRTKADLFAGSQPAGDSADVTVSAHTGAGMDDLLDAIQAAAEDGLGTGDALITRARHRAALEACVAHLDRVSGSAGGLPELAAEDLRLAVRALGEVAGHVGVEDVLDRLFSGFCIGK.

(6S)-5-formyl-5,6,7,8-tetrahydrofolate contacts are provided by R23, E81, and R121. Residues 219–366 (GFTVVLAGAP…LLDAIQAAAE (148 aa)) form the TrmE-type G domain. GTP-binding positions include 229 to 234 (NSGKST), 248 to 254 (SDSPGTT), and 273 to 276 (DTAG). Residues S233 and T254 each coordinate Mg(2+). K441 lines the (6S)-5-formyl-5,6,7,8-tetrahydrofolate pocket.

Belongs to the TRAFAC class TrmE-Era-EngA-EngB-Septin-like GTPase superfamily. TrmE GTPase family. Homodimer. Heterotetramer of two MnmE and two MnmG subunits. The cofactor is K(+).

Its subcellular location is the cytoplasm. Functionally, exhibits a very high intrinsic GTPase hydrolysis rate. Involved in the addition of a carboxymethylaminomethyl (cmnm) group at the wobble position (U34) of certain tRNAs, forming tRNA-cmnm(5)s(2)U34. This Methylobacterium radiotolerans (strain ATCC 27329 / DSM 1819 / JCM 2831 / NBRC 15690 / NCIMB 10815 / 0-1) protein is tRNA modification GTPase MnmE.